The chain runs to 294 residues: F-box protein SKIP3 (294 aa).

The F-box domain occupies 21–67 (SSTLDSLPEGCISNIISFTSPEDACVAAAVSKIFESAVKSDIVWEKF).

As to quaternary structure, part of a SCF (SKP1-cullin-F-box) protein ligase complex. Interacts with SKP1A/ASK1.

It functions in the pathway protein modification; protein ubiquitination. The protein is F-box protein SKIP3 (SKIP3) of Arabidopsis thaliana (Mouse-ear cress).